A 595-amino-acid polypeptide reads, in one-letter code: P2X purinoceptor 7 (595 aa).

Over 1-22 (MPACCSCSDVFQYETNKVTRIQ) the chain is Cytoplasmic. C4 carries S-palmitoyl cysteine lipidation. The chain crosses the membrane as a helical span at residues 23–46 (SMNYGTIKWFFHVIIFSYVCFALV). The Extracellular segment spans residues 47 to 328 (SDKLYQRKEP…ILVFGTGGKF (282 aa)). 3 disulfides stabilise this stretch: C119/C168, C129/C152, and C135/C162. ADP-ribosylarginine occurs at positions 125 and 133. Residue N187 is glycosylated (N-linked (GlcNAc...) asparagine). T189 contacts ATP. N202 and N213 each carry an N-linked (GlcNAc...) asparagine glycan. A disulfide bridge links C216 with C226. An N-linked (GlcNAc...) asparagine glycan is attached at N241. The cysteines at positions 260 and 269 are disulfide-linked. N284 is a glycosylation site (N-linked (GlcNAc...) asparagine). R294 and K311 together coordinate ATP. The helical transmembrane segment at 329 to 353 (DIIQLVVYIGSTLSYFGLAAVFIDF) threads the bilayer. S342 contributes to the Na(+) binding site. Position 343 is a phosphotyrosine (Y343). The Cytoplasmic segment spans residues 354-595 (LIDTYSSNCC…GQYSGFKSPY (242 aa)). The segment at 360-377 (SNCCRSHIYPWCKCCQPC) is C-cys anchor. S-palmitoyl cysteine attachment occurs at residues C362, C363, C374, and C377. At S390 the chain carries Phosphoserine. The interval 395–595 (KPTLKYVSFV…GQYSGFKSPY (201 aa)) is cytoplasmic ballast. Zn(2+) is bound by residues C479, C499, and C506. 4 residues coordinate GTP: R546, H547, Y550, and A567. Position 572 (C572) interacts with Zn(2+). Positions 583, 589, and 590 each coordinate GTP.

The protein belongs to the P2X receptor family. Homotrimers. Interacts with LAMA3, ITGB2, ACTB, ACTN4, SVIL, MPP3, HSPA1, HSPCB, HSPA8, PIK230 and PTPRB. Interacts (via C-terminus) with EMP2. Interacts with isoform B; this interaction potentiates P2RX7 responses. Post-translationally, phosphorylation results in its inactivation. In terms of processing, ADP-ribosylation at Arg-125 is necessary and sufficient to activate P2RX7 and gate the channel. Palmitoylation of several cysteines in the C-terminal cytoplasmic tail is required for efficient localization to cell surface. Palmitoylation prevents channel desensitization by physically anchoring the palmitoylated groups to the membrane. As to expression, widely expressed with highest levels in brain and immune tissues. In terms of tissue distribution, predominant form in many tissues.

The protein localises to the cell membrane. It carries out the reaction Ca(2+)(in) = Ca(2+)(out). The enzyme catalyses K(+)(in) = K(+)(out). The catalysed reaction is Na(+)(in) = Na(+)(out). Its activity is regulated as follows. Activated by high extracellular ATP levels (0.1-2.5 mM). The synthetic analog 2'(3')-O-(4-benzoylbenzoyl)ATP (BzATP) acts as a potent agonist. Does not undergo desensitization, instead, undergoes a facilitation process where currents progressively increase with repetitive or prolonged agonist application. Palmitoylation prevents channel desensitization. The permeability of the P2RX7 channel is modulated by the amount of cholesterol in the plasma membrane. In terms of biological role, ATP-gated nonselective transmembrane cation channel that requires high millimolar concentrations of ATP for activation. Upon ATP binding, it rapidly opens to allow the influx of small cations Na(+) and Ca(2+), and the K(+) efflux. Also has the ability to form a large pore in the cell membrane, allowing the passage of large cationic molecules. In microglia, may mediate NADPH transport across the plasma membrane. In immune cells, P2RX7 acts as a molecular sensor in pathological inflammatory states by detecting and responding to high local concentrations of extracellar ATP. In microglial cells, P2RX7 activation leads to the release of pro-inflammatory cytokines, such as IL-1beta and IL-18, through the activation of the NLRP3 inflammasome and caspase-1. Cooperates with KCNK6 to activate NLRP3 inflammasome. Activates death pathways leading to apoptosis and autophagy. Activates death pathways leading to pyroptosis. Shows ion channel activity but no macropore function. Its function is as follows. Non-functional channel. In Homo sapiens (Human), this protein is P2X purinoceptor 7 (P2RX7).